The following is a 239-amino-acid chain: tRNA (guanine-N(7)-)-methyltransferase (239 aa).

S-adenosyl-L-methionine contacts are provided by Glu-69, Glu-94, Asp-121, and Asp-144. Asp-144 is a catalytic residue. Substrate is bound at residue Lys-148. An interaction with RNA region spans residues 150-155 (RHNKRR). Residues Asp-180 and 217-220 (TKFE) each bind substrate.

Belongs to the class I-like SAM-binding methyltransferase superfamily. TrmB family. In terms of assembly, monomer.

It carries out the reaction guanosine(46) in tRNA + S-adenosyl-L-methionine = N(7)-methylguanosine(46) in tRNA + S-adenosyl-L-homocysteine. It functions in the pathway tRNA modification; N(7)-methylguanine-tRNA biosynthesis. Its function is as follows. Catalyzes the formation of N(7)-methylguanine at position 46 (m7G46) in tRNA. The chain is tRNA (guanine-N(7)-)-methyltransferase from Cronobacter sakazakii (strain ATCC BAA-894) (Enterobacter sakazakii).